The chain runs to 334 residues: Protein U17/U16 (334 aa).

This sequence belongs to the herpesviridae US22 family.

In terms of biological role, isoform 3 can transactivate the human immunodeficiency virus type 1 promoter. This is Protein U17/U16 (U17/U16) from Human herpesvirus 6A (strain Uganda-1102) (HHV-6 variant A).